A 365-amino-acid polypeptide reads, in one-letter code: MGAGAGGLSLRGARLSPEERANSSKSRAIDRALSKDHTDDLNRFKILLLGTAESGKSTIFRQMRVLHLDGYAKEDALEYLSIIHSNCMEALTQLVEACSAFGILHDITVQEDVDRFEGFKKKLRDPEGLVIPVVIGRCMDRVWQSSSMQMCYETRRFRFALLDSAKFMDNIVRLTEDNYVPTIQDIVHCRISTTGINEIAFNHKKMDFKMVDVGGQRSERRKWIHCFDNVDMILFIVSMSDYDQLDPEDHKYNRMKQSYEIFKTIVHCDLFRHASIVLFLNKYDVFVEKLKTSPLRRSFKSYDGDNSEESARDFIKKLFRRCITDRHKFFVFETTATDTGNIDLVFGSAVAHIVNENLRSAGLHE.

G2 carries N-myristoyl glycine lipidation. Residues 42–364 (NRFKILLLGT…NENLRSAGLH (323 aa)) enclose the G-alpha domain. Residues 45–58 (KILLLGTAESGKST) form a G1 motif region. Residues 50-57 (GTAESGKS), 187-193 (VHCRIST), 212-216 (DVGGQ), 281-284 (NKYD), and A336 contribute to the GTP site. The Mg(2+) site is built by S57 and T193. The G2 motif stretch occupies residues 185–193 (DIVHCRIST). A G3 motif region spans residues 208 to 217 (FKMVDVGGQR). A G4 motif region spans residues 277 to 284 (VLFLNKYD). The tract at residues 334–339 (TTATDT) is G5 motif.

This sequence belongs to the G-alpha family. G proteins are composed of 3 units; alpha, beta and gamma. The alpha chain contains the guanine nucleotide binding site.

In terms of biological role, guanine nucleotide-binding proteins (G proteins) are involved as modulators or transducers in various transmembrane signaling systems. The sequence is that of Guanine nucleotide-binding protein alpha-6 subunit (gpa-6) from Caenorhabditis briggsae.